A 92-amino-acid polypeptide reads, in one-letter code: Small ribosomal subunit protein uS19 (92 aa).

This sequence belongs to the universal ribosomal protein uS19 family.

Protein S19 forms a complex with S13 that binds strongly to the 16S ribosomal RNA. This is Small ribosomal subunit protein uS19 (rpsS) from Synechocystis sp. (strain ATCC 27184 / PCC 6803 / Kazusa).